Consider the following 182-residue polypeptide: Adenine phosphoribosyltransferase (182 aa).

This sequence belongs to the purine/pyrimidine phosphoribosyltransferase family. Homodimer.

It is found in the cytoplasm. The enzyme catalyses AMP + diphosphate = 5-phospho-alpha-D-ribose 1-diphosphate + adenine. The protein operates within purine metabolism; AMP biosynthesis via salvage pathway; AMP from adenine: step 1/1. Its function is as follows. Catalyzes a salvage reaction resulting in the formation of AMP, that is energically less costly than de novo synthesis. This is Adenine phosphoribosyltransferase from Streptomyces coelicolor (strain ATCC BAA-471 / A3(2) / M145).